An 843-amino-acid polypeptide reads, in one-letter code: Protein kintoun (843 aa).

Disordered stretches follow at residues 212–242 (PTAE…VHPM), 371–417 (FSRE…PVHS), 545–672 (YTVK…GASQ), and 761–843 (KKNQ…DDVM). A Phosphoserine modification is found at serine 376. Over residues 387–397 (PVEEEEADADL) the composition is skewed to acidic residues. Basic and acidic residues predominate over residues 564–573 (VKFDHNKESL). The segment covering 584 to 593 (TEEDEVEEQH) has biased composition (acidic residues). Positions 605-619 (QNKKPSKKQRKRNKK) are enriched in basic residues. The segment covering 658–671 (YSECNDSSVGSGAS) has biased composition (polar residues). Residues 761–775 (KKNQKRRDLKLRAQQ) show a composition bias toward basic residues. Serine 779 is modified (phosphoserine).

This sequence belongs to the PIH1 family. Kintoun subfamily. Interacts with Pp1alpha-96A, Pp1-87B, Pp1-13C and flw.

Its subcellular location is the cytoplasm. Required for cytoplasmic pre-assembly of axonemal dyneins, thereby playing a central role in motility in cilia and flagella. Involved in pre-assembly of dynein arm complexes in the cytoplasm before intraflagellar transport loads them for the ciliary compartment. In Drosophila ananassae (Fruit fly), this protein is Protein kintoun.